Consider the following 167-residue polypeptide: Endoribonuclease YbeY (167 aa).

H131, H135, and H141 together coordinate Zn(2+).

Belongs to the endoribonuclease YbeY family. It depends on Zn(2+) as a cofactor.

Its subcellular location is the cytoplasm. Functionally, single strand-specific metallo-endoribonuclease involved in late-stage 70S ribosome quality control and in maturation of the 3' terminus of the 16S rRNA. The chain is Endoribonuclease YbeY from Rickettsia akari (strain Hartford).